Here is a 174-residue protein sequence, read N- to C-terminus: MKHTLSVLVQDEAGVLSRISGLFARRGFNIASLAVGPAEQIGVSRITMVVQGDNRTIEQLTKQLYKLVNILNVQDVTNIPSVERELMLIKIQINSQTRTEALEIVRIFRAKIVDIAEDLLIIEVTGDPGKIVAIEQLLTKFGIIEIARTGKILLVRTSKINTEYLKNRVVAYGT.

One can recognise an ACT domain in the interval 4–78 (TLSVLVQDEA…NILNVQDVTN (75 aa)).

The protein belongs to the acetolactate synthase small subunit family. Dimer of large and small chains.

Its subcellular location is the plastid. The protein resides in the chloroplast. It catalyses the reaction 2 pyruvate + H(+) = (2S)-2-acetolactate + CO2. The protein operates within amino-acid biosynthesis; L-isoleucine biosynthesis; L-isoleucine from 2-oxobutanoate: step 1/4. It participates in amino-acid biosynthesis; L-valine biosynthesis; L-valine from pyruvate: step 1/4. The chain is Acetolactate synthase small subunit (ilvH) from Pyropia yezoensis (Susabi-nori).